The following is a 479-amino-acid chain: F-box protein At5g51380 (479 aa).

The interval 1–20 (MTFREKMPTSPKSPLRRRRS) is disordered. The F-box domain maps to 62–108 (DRTLSLSDSLLLKILEKLPESQNEDVSLVCKRWLSVQGRRLRSMKVF).

This chain is F-box protein At5g51380, found in Arabidopsis thaliana (Mouse-ear cress).